A 646-amino-acid chain; its full sequence is NADP-dependent malic enzyme 4, chloroplastic (646 aa).

A chloroplast-targeting transit peptide spans 1-74 (MISLTPSLFL…LETSAADIVP (74 aa)). The active-site Proton donor is Y194. R247 is a binding site for NADP(+). Residue K265 is the Proton acceptor of the active site. 3 residues coordinate a divalent metal cation: E337, D338, and D361. NADP(+) contacts are provided by residues D361, 390–406 (LFLGAGEAGTGIAELIA), and N502.

Belongs to the malic enzymes family. As to quaternary structure, homodimer and homotetramer. The cofactor is Mg(2+). It depends on Mn(2+) as a cofactor. As to expression, expressed in leaves, stems, flowers and roots, mainly in vascular system. In roots, present in the stele, including the vascular tissue and the pericycle, mainly at emerging lateral roots and at root tips.

The protein localises to the plastid. The protein resides in the chloroplast. It catalyses the reaction (S)-malate + NADP(+) = pyruvate + CO2 + NADPH. The enzyme catalyses oxaloacetate + H(+) = pyruvate + CO2. The protein operates within photosynthesis; C3 acid pathway. Its function is as follows. The chloroplastic ME isoform decarboxylates malate shuttled from neighboring mesophyll cells. The CO(2) released is then refixed by ribulose-bisphosphate carboxylase. This pathway eliminates the photorespiratory loss of CO(2) that occurs in most plants. This is NADP-dependent malic enzyme 4, chloroplastic (NADP-ME4) from Arabidopsis thaliana (Mouse-ear cress).